The primary structure comprises 105 residues: Large ribosomal subunit protein eL36 (105 aa).

The segment at 86 to 105 (QAGKKKRDDIANINRKASAK) is disordered.

The protein belongs to the eukaryotic ribosomal protein eL36 family.

In Dictyostelium discoideum (Social amoeba), this protein is Large ribosomal subunit protein eL36 (rpl36).